A 416-amino-acid chain; its full sequence is Orexin/Hypocretin receptor type 1 (416 aa).

The segment at 1–22 is disordered; that stretch reads MEPSATPGAQPGVPTSSGEPFH. The Extracellular segment spans residues 1-46; sequence MEPSATPGAQPGVPTSSGEPFHLPPDYEDEFLRYLWRDYLYPKQYE. The segment at 26-41 is required for response to orexin-A; the sequence is DYEDEFLRYLWRDYLY. The helical transmembrane segment at 47–67 threads the bilayer; sequence WVLIAAYVAVFLIALVGNTLV. Residues 68–82 lie on the Cytoplasmic side of the membrane; sequence CLAVWRNHHMRTVTN. The chain crosses the membrane as a helical span at residues 83–105; the sequence is YFIVNLSLADVLVTAICLPASLL. Over 106 to 119 the chain is Extracellular; sequence VDITESWLFGQALC. Residues cysteine 119 and cysteine 202 are joined by a disulfide bond. The helical transmembrane segment at 120-140 threads the bilayer; it reads KVIPYLQAVSVSVAVLTLSFI. At 141-160 the chain is on the cytoplasmic side; sequence ALDRWYAICHPLLFKSTARR. Residues 161 to 182 traverse the membrane as a helical segment; sequence ARGSILGIWAVSLAVMVPQAAV. At 183–213 the chain is on the extracellular side; that stretch reads MECSSVLPELANRTRLFSVCDEHWADELYPK. N-linked (GlcNAc...) asparagine glycosylation is present at asparagine 194. A helical membrane pass occupies residues 214–235; the sequence is IYHSCFFIVTYLAPLGLMAMAY. Residues 236–298 lie on the Cytoplasmic side of the membrane; sequence FQIFRKLWGR…QMRARRKTAK (63 aa). Residues 299 to 321 traverse the membrane as a helical segment; that stretch reads MLMVVLLVFALCYLPISVLNVLK. Residues 322-336 lie on the Extracellular side of the membrane; that stretch reads RVFGMFRQASDREAV. The helical transmembrane segment at 337–360 threads the bilayer; sequence YACFTFSHWLVYANSAANPIIYNF. The Cytoplasmic segment spans residues 361-416; the sequence is LSGKFREQFKAAFSCCLPGLGPGSSARHKSLSLQSRCSVSKVSEHVVLTTVTTVLS.

It belongs to the G-protein coupled receptor 1 family. As to expression, widely expressed.

It is found in the cell membrane. Its function is as follows. Moderately selective excitatory receptor for orexin-A and, with a lower affinity, for orexin-B neuropeptide. Triggers an increase in cytoplasmic Ca(2+) levels in response to orexin-A binding. This Mus musculus (Mouse) protein is Orexin/Hypocretin receptor type 1.